Consider the following 103-residue polypeptide: MNSTFNQTDSGIFSNRTEENLLCCNFSSVVTDNGFAAAAPDERSLFIMRIVQIAVMCVLSLTVVFGIFFLGCNLLIKSEGMINFLVTDRRPSKEVEAVIVGAY.

Residues 50-70 (IVQIAVMCVLSLTVVFGIFFL) form a helical membrane-spanning segment.

This sequence belongs to the reprimo family.

The protein resides in the cytoplasm. It localises to the membrane. Its function is as follows. May be involved in the regulation of p53-dependent G2 arrest of the cell cycle. The polypeptide is Protein reprimo A (Danio rerio (Zebrafish)).